The chain runs to 399 residues: Argininosuccinate synthase (399 aa).

An ATP-binding site is contributed by A8 to S16. Y87 contacts L-citrulline. ATP is bound at residue G117. L-aspartate contacts are provided by T119, N123, and D124. N123 lines the L-citrulline pocket. L-citrulline is bound by residues R127, S175, E260, and Y272.

This sequence belongs to the argininosuccinate synthase family. Type 1 subfamily. As to quaternary structure, homotetramer.

It localises to the cytoplasm. The enzyme catalyses L-citrulline + L-aspartate + ATP = 2-(N(omega)-L-arginino)succinate + AMP + diphosphate + H(+). The protein operates within amino-acid biosynthesis; L-arginine biosynthesis; L-arginine from L-ornithine and carbamoyl phosphate: step 2/3. The sequence is that of Argininosuccinate synthase from Mycolicibacterium smegmatis (strain ATCC 700084 / mc(2)155) (Mycobacterium smegmatis).